A 322-amino-acid polypeptide reads, in one-letter code: Arginase (322 aa).

Mn(2+)-binding residues include His-113, Asp-141, His-143, and Asp-145. Substrate is bound by residues His-143 to Asn-147, Ser-154 to Asn-156, and Asp-200. 2 residues coordinate Mn(2+): Asp-247 and Asp-249. Positions 261 and 292 each coordinate substrate.

Belongs to the arginase family. As to quaternary structure, homotrimer. The cofactor is Mn(2+).

The catalysed reaction is L-arginine + H2O = urea + L-ornithine. It participates in nitrogen metabolism; urea cycle; L-ornithine and urea from L-arginine: step 1/1. The sequence is that of Arginase (ARG) from Coccidioides posadasii (strain C735) (Valley fever fungus).